The chain runs to 136 residues: Large ribosomal subunit protein uL16 (136 aa).

The protein belongs to the universal ribosomal protein uL16 family. In terms of assembly, part of the 50S ribosomal subunit.

In terms of biological role, binds 23S rRNA and is also seen to make contacts with the A and possibly P site tRNAs. The sequence is that of Large ribosomal subunit protein uL16 from Hamiltonella defensa subsp. Acyrthosiphon pisum (strain 5AT).